The chain runs to 906 residues: Protein translocase subunit SecA (906 aa).

ATP contacts are provided by residues Q90, 108–112, and D503; that span reads GEGKT. The interval 845–882 is disordered; that stretch reads TAAEAPASVPQPQAAVAPQPAPELVGADNGESQPQAWG. Low complexity predominate over residues 846 to 862; the sequence is AAEAPASVPQPQAAVAP. Positions 890, 892, 901, and 902 each coordinate Zn(2+).

This sequence belongs to the SecA family. Monomer and homodimer. Part of the essential Sec protein translocation apparatus which comprises SecA, SecYEG and auxiliary proteins SecDF-YajC and YidC. Zn(2+) serves as cofactor.

It localises to the cell inner membrane. The protein localises to the cytoplasm. It catalyses the reaction ATP + H2O + cellular proteinSide 1 = ADP + phosphate + cellular proteinSide 2.. Part of the Sec protein translocase complex. Interacts with the SecYEG preprotein conducting channel. Has a central role in coupling the hydrolysis of ATP to the transfer of proteins into and across the cell membrane, serving both as a receptor for the preprotein-SecB complex and as an ATP-driven molecular motor driving the stepwise translocation of polypeptide chains across the membrane. The protein is Protein translocase subunit SecA of Cereibacter sphaeroides (strain ATCC 17025 / ATH 2.4.3) (Rhodobacter sphaeroides).